Reading from the N-terminus, the 523-residue chain is Putative UDP-glucuronosyltransferase ugt-50 (523 aa).

Residues 1–25 (MHYSQMRWMFFCLTALLHGSFIVNA) form the signal peptide. N-linked (GlcNAc...) asparagine glycans are attached at residues N84, N248, N283, and N487. The helical transmembrane segment at 490–508 (IIEHNHLDLFFYLCIISLL) threads the bilayer.

It belongs to the UDP-glycosyltransferase family.

It is found in the membrane. The enzyme catalyses glucuronate acceptor + UDP-alpha-D-glucuronate = acceptor beta-D-glucuronoside + UDP + H(+). The protein is Putative UDP-glucuronosyltransferase ugt-50 (ugt-50) of Caenorhabditis elegans.